The sequence spans 121 residues: MKLLIVFGLLTSVYCIHKECSIQECCENQPYQIEDPCPIHYYSDWFIKIGSRKSARLVQLCEGDYGKRIPIHYQMFGNYTISCEPLEINCQAPPVGSLIVRCSYDYDFVEHHDVRVVLDFV.

An N-terminal signal peptide occupies residues 1–15; the sequence is MKLLIVFGLLTSVYC. The region spanning 19-121 is the SARS ORF8 Ig-like domain; it reads ECSIQECCEN…HDVRVVLDFV (103 aa). 3 disulfide bridges follow: C25-C90, C37-C102, and C61-C83.

The chain is Non-structural protein 8 from Bat coronavirus Rp3/2004 (BtCoV/Rp3/2004).